The following is a 103-amino-acid chain: Large ribosomal subunit protein bL21 (103 aa).

This sequence belongs to the bacterial ribosomal protein bL21 family. In terms of assembly, part of the 50S ribosomal subunit. Contacts protein L20.

Its function is as follows. This protein binds to 23S rRNA in the presence of protein L20. The protein is Large ribosomal subunit protein bL21 of Actinobacillus pleuropneumoniae serotype 5b (strain L20).